We begin with the raw amino-acid sequence, 250 residues long: tRNA (guanine-N(1)-)-methyltransferase (250 aa).

Residues G113 and 133-138 (IGDYVL) each bind S-adenosyl-L-methionine.

Belongs to the RNA methyltransferase TrmD family. In terms of assembly, homodimer.

The protein resides in the cytoplasm. It catalyses the reaction guanosine(37) in tRNA + S-adenosyl-L-methionine = N(1)-methylguanosine(37) in tRNA + S-adenosyl-L-homocysteine + H(+). Its function is as follows. Specifically methylates guanosine-37 in various tRNAs. The sequence is that of tRNA (guanine-N(1)-)-methyltransferase from Photorhabdus laumondii subsp. laumondii (strain DSM 15139 / CIP 105565 / TT01) (Photorhabdus luminescens subsp. laumondii).